Consider the following 685-residue polypeptide: Methionine--tRNA ligase (685 aa).

A 'HIGH' region motif is present at residues 12-22; it reads PYANGSIHLGH. Positions 143, 146, 156, and 159 each coordinate Zn(2+). The 'KMSKS' region motif lies at 339 to 343; that stretch reads KMSKS. An ATP-binding site is contributed by Lys-342. The 104-residue stretch at 582-685 folds into the tRNA-binding domain; sequence DFMKIDMRVA…AGAQPGDKVG (104 aa).

This sequence belongs to the class-I aminoacyl-tRNA synthetase family. MetG type 1 subfamily. Homodimer. Requires Zn(2+) as cofactor.

The protein resides in the cytoplasm. The enzyme catalyses tRNA(Met) + L-methionine + ATP = L-methionyl-tRNA(Met) + AMP + diphosphate. In terms of biological role, is required not only for elongation of protein synthesis but also for the initiation of all mRNA translation through initiator tRNA(fMet) aminoacylation. The protein is Methionine--tRNA ligase of Neisseria meningitidis serogroup C (strain 053442).